The following is a 556-amino-acid chain: Potassium-transporting ATPase potassium-binding subunit (556 aa).

Transmembrane regions (helical) follow at residues 6–26 (AGLI…VPLG), 65–85 (GVLA…LVQG), 133–153 (GLAV…VALV), 176–196 (LRIL…GGAI), 249–269 (PTAW…FSLP), 283–303 (YAIA…MLWF), 378–398 (GLYG…LMVG), 419–439 (YFLV…ALPG), 483–503 (ALGL…LALA), and 526–546 (FVGM…LPML).

The protein belongs to the KdpA family. As to quaternary structure, the system is composed of three essential subunits: KdpA, KdpB and KdpC.

Its subcellular location is the cell membrane. Functionally, part of the high-affinity ATP-driven potassium transport (or Kdp) system, which catalyzes the hydrolysis of ATP coupled with the electrogenic transport of potassium into the cytoplasm. This subunit binds the extracellular potassium ions and delivers the ions to the membrane domain of KdpB through an intramembrane tunnel. The protein is Potassium-transporting ATPase potassium-binding subunit of Mycolicibacterium paratuberculosis (strain ATCC BAA-968 / K-10) (Mycobacterium paratuberculosis).